The primary structure comprises 278 residues: Ribosomal RNA small subunit methyltransferase A (278 aa).

Residues Asn27, Leu29, Gly54, Glu75, Asp95, and Asn118 each coordinate S-adenosyl-L-methionine.

It belongs to the class I-like SAM-binding methyltransferase superfamily. rRNA adenine N(6)-methyltransferase family. RsmA subfamily.

It is found in the cytoplasm. It catalyses the reaction adenosine(1518)/adenosine(1519) in 16S rRNA + 4 S-adenosyl-L-methionine = N(6)-dimethyladenosine(1518)/N(6)-dimethyladenosine(1519) in 16S rRNA + 4 S-adenosyl-L-homocysteine + 4 H(+). Functionally, specifically dimethylates two adjacent adenosines (A1518 and A1519) in the loop of a conserved hairpin near the 3'-end of 16S rRNA in the 30S particle. May play a critical role in biogenesis of 30S subunits. The chain is Ribosomal RNA small subunit methyltransferase A from Chlamydia caviae (strain ATCC VR-813 / DSM 19441 / 03DC25 / GPIC) (Chlamydophila caviae).